A 41-amino-acid polypeptide reads, in one-letter code: Large ribosomal subunit protein bL36 (41 aa).

This sequence belongs to the bacterial ribosomal protein bL36 family.

This Sphingopyxis alaskensis (strain DSM 13593 / LMG 18877 / RB2256) (Sphingomonas alaskensis) protein is Large ribosomal subunit protein bL36.